Consider the following 522-residue polypeptide: Bifunctional purine biosynthesis protein PurH (522 aa).

In terms of domain architecture, MGS-like spans 1-145; sequence MKPIARALIS…KNHAAVTVIV (145 aa).

The protein belongs to the PurH family.

It catalyses the reaction (6R)-10-formyltetrahydrofolate + 5-amino-1-(5-phospho-beta-D-ribosyl)imidazole-4-carboxamide = 5-formamido-1-(5-phospho-D-ribosyl)imidazole-4-carboxamide + (6S)-5,6,7,8-tetrahydrofolate. The enzyme catalyses IMP + H2O = 5-formamido-1-(5-phospho-D-ribosyl)imidazole-4-carboxamide. It participates in purine metabolism; IMP biosynthesis via de novo pathway; 5-formamido-1-(5-phospho-D-ribosyl)imidazole-4-carboxamide from 5-amino-1-(5-phospho-D-ribosyl)imidazole-4-carboxamide (10-formyl THF route): step 1/1. Its pathway is purine metabolism; IMP biosynthesis via de novo pathway; IMP from 5-formamido-1-(5-phospho-D-ribosyl)imidazole-4-carboxamide: step 1/1. The protein is Bifunctional purine biosynthesis protein PurH of Nitrosococcus oceani (strain ATCC 19707 / BCRC 17464 / JCM 30415 / NCIMB 11848 / C-107).